A 1016-amino-acid chain; its full sequence is Mediator of RNA polymerase II transcription subunit 5 (1016 aa).

The protein belongs to the Mediator complex subunit 5 family. Component of the Mediator complex.

It is found in the nucleus. Component of the Mediator complex, a coactivator involved in the regulated transcription of nearly all RNA polymerase II-dependent genes. Mediator functions as a bridge to convey information from gene-specific regulatory proteins to the basal RNA polymerase II transcription machinery. Mediator is recruited to promoters by direct interactions with regulatory proteins and serves as a scaffold for the assembly of a functional preinitiation complex with RNA polymerase II and the general transcription factors. The polypeptide is Mediator of RNA polymerase II transcription subunit 5 (nut1) (Aspergillus terreus (strain NIH 2624 / FGSC A1156)).